The chain runs to 444 residues: Phosphomethylpyrimidine synthase (444 aa).

Substrate contacts are provided by residues Asn-80, Met-109, Tyr-138, His-174, 194-196 (SRG), 235-238 (DSLR), and Glu-274. Residue His-278 participates in Zn(2+) binding. Substrate is bound at residue Tyr-301. His-342 contributes to the Zn(2+) binding site. 3 residues coordinate [4Fe-4S] cluster: Cys-422, Cys-425, and Cys-430.

It belongs to the ThiC family. In terms of assembly, homodimer. It depends on [4Fe-4S] cluster as a cofactor.

It carries out the reaction 5-amino-1-(5-phospho-beta-D-ribosyl)imidazole + S-adenosyl-L-methionine = 4-amino-2-methyl-5-(phosphooxymethyl)pyrimidine + CO + 5'-deoxyadenosine + formate + L-methionine + 3 H(+). The protein operates within cofactor biosynthesis; thiamine diphosphate biosynthesis. Its function is as follows. Catalyzes the synthesis of the hydroxymethylpyrimidine phosphate (HMP-P) moiety of thiamine from aminoimidazole ribotide (AIR) in a radical S-adenosyl-L-methionine (SAM)-dependent reaction. This is Phosphomethylpyrimidine synthase from Nitratiruptor sp. (strain SB155-2).